Reading from the N-terminus, the 1504-residue chain is Nischarin (1504 aa).

An N-acetylalanine modification is found at alanine 2. The necessary for binding to phosphoinositide-3-P; not sufficient for targeting to endosomes stretch occupies residues 2–133; the sequence is ATARTFGPER…GITAALAEEL (132 aa). The 111-residue stretch at 11–121 folds into the PX domain; sequence REAEPAKEAR…AHFLHFHFYE (111 aa). A necessary for homooligomerization and targeting to endosomes region spans residues 120–695; sequence YEINGITAAL…ERLALEWALG (576 aa). Residues 245-869 are interaction with PAK1; it reads LSVRFSATSM…LVYSDKRMVQ (625 aa). 6 LRR repeats span residues 288 to 309, 311 to 332, 333 to 354, 356 to 377, 378 to 399, and 403 to 424; these read ALTT…VKLI, KIEF…QHLY, NLVH…HTKL, NIKT…HKLY, SLVN…RSIG, and CLEH…RTKV. The span at 463–478 shows a compositional bias: basic and acidic residues; the sequence is KSKLSNPEKKGGEDSR. Disordered regions lie at residues 463–501, 524–547, 554–573, and 628–687; these read KSKL…SASL, SSTD…LESI, SDDL…EHAE, and REEG…EEER. Serine 541, serine 543, and serine 546 each carry phosphoserine. Residues 634-695 adopt a coiled-coil conformation; that stretch reads EQGEEEDEEE…ERLALEWALG (62 aa). Acidic residues-rich tracts occupy residues 635–649 and 661–685; these read QGEE…EEDV and DVEE…EAEE. The tract at residues 660-869 is interaction with LIMK; the sequence is PDVEEEEGGG…LVYSDKRMVQ (210 aa). An interaction with ITGA5 region spans residues 709–807; it reads KVLWCFLIHV…ANLHEFHADL (99 aa). The segment at 1016-1104 is disordered; the sequence is TPGTGGSPQG…PAPPPAEAPA (89 aa). Phosphoserine is present on serine 1022. Residues 1032-1043 show a composition bias toward basic and acidic residues; sequence PAERRASNDQRP. Over residues 1063–1078 the composition is skewed to low complexity; that stretch reads PAAASASGPAKTPAPA. Threonine 1282 carries the post-translational modification Phosphothreonine. A Phosphoserine modification is found at serine 1284.

In terms of assembly, homooligomer. Interacts with GRB2. Interacts with PIK3R1; probably associates with the PI3-kinase complex. Interacts with IRS4. Found in a complex with ITGA5 and PAK1. Found in a complex with LIMK1 and PAK1. Interacts with ITGA5 (via cytoplasmic domain); this interaction is direct. Interacts with PAK1 (via kinase domain); this interaction is direct and is increased upon activation of PAK1. Interacts with LIMK1 (via PDZ and kinase domain); this interaction is direct. Interacts with LIMK2; this interaction depends on LIMK2 activity. Interacts with RAC1 (activated state). Interacts with STK11; this interaction may increase STK11 activity. In terms of tissue distribution, isoform 1, isoform 3 and isoform 4 are expressed in brain. Isoform 1 is expressed in endocrine tissues.

Its subcellular location is the cell membrane. It is found in the cytoplasm. It localises to the early endosome. The protein localises to the recycling endosome. Its function is as follows. Acts either as the functional imidazoline-1 receptor (I1R) candidate or as a membrane-associated mediator of the I1R signaling. Binds numerous imidazoline ligands that induces initiation of cell-signaling cascades triggering to cell survival, growth and migration. Its activation by the agonist rilmenidine induces an increase in phosphorylation of mitogen-activated protein kinases MAPK1 and MAPK3 in rostral ventrolateral medulla (RVLM) neurons that exhibited rilmenidine-evoked hypotension. Blocking its activation with efaroxan abolished rilmenidine-induced mitogen-activated protein kinase phosphorylation in RVLM neurons. Acts as a modulator of Rac-regulated signal transduction pathways. Suppresses Rac1-stimulated cell migration by interacting with PAK1 and inhibiting its kinase activity. Also blocks Pak-independent Rac signaling by interacting with RAC1 and inhibiting Rac1-stimulated NF-kB response element and cyclin D1 promoter activation. Also inhibits LIMK1 kinase activity by reducing LIMK1 'Tyr-508' phosphorylation. Inhibits Rac-induced cell migration and invasion in breast and colon epithelial cells. Inhibits lamellipodia formation, when overexpressed. Plays a role in protection against apoptosis. Involved in association with IRS4 in the enhancement of insulin activation of MAPK1 and MAPK3. When overexpressed, induces a redistribution of cell surface ITGA5 integrin to intracellular endosomal structures. In Homo sapiens (Human), this protein is Nischarin (NISCH).